We begin with the raw amino-acid sequence, 210 residues long: Imidazole glycerol phosphate synthase subunit HisH (210 aa).

Residues 7 to 210 (KVVIIDTGCA…SQLIKNFLEM (204 aa)) form the Glutamine amidotransferase type-1 domain. Cysteine 82 acts as the Nucleophile in catalysis. Catalysis depends on residues histidine 192 and glutamate 194.

In terms of assembly, heterodimer of HisH and HisF.

Its subcellular location is the cytoplasm. The catalysed reaction is 5-[(5-phospho-1-deoxy-D-ribulos-1-ylimino)methylamino]-1-(5-phospho-beta-D-ribosyl)imidazole-4-carboxamide + L-glutamine = D-erythro-1-(imidazol-4-yl)glycerol 3-phosphate + 5-amino-1-(5-phospho-beta-D-ribosyl)imidazole-4-carboxamide + L-glutamate + H(+). It catalyses the reaction L-glutamine + H2O = L-glutamate + NH4(+). It participates in amino-acid biosynthesis; L-histidine biosynthesis; L-histidine from 5-phospho-alpha-D-ribose 1-diphosphate: step 5/9. IGPS catalyzes the conversion of PRFAR and glutamine to IGP, AICAR and glutamate. The HisH subunit catalyzes the hydrolysis of glutamine to glutamate and ammonia as part of the synthesis of IGP and AICAR. The resulting ammonia molecule is channeled to the active site of HisF. This Photobacterium profundum (strain SS9) protein is Imidazole glycerol phosphate synthase subunit HisH.